We begin with the raw amino-acid sequence, 185 residues long: uncharacterized protein (185 aa).

A signal peptide spans 1-18 (MLLKLILILCFLVTLSLS). The tract at residues 30–185 (TQGPTIASGG…VQDCGEITGW (156 aa)) is disordered. The span at 86-101 (RAQEGGKKDTTKEQPK) shows a compositional bias: basic and acidic residues. The span at 103–116 (NNNNKNLGRHSSSG) shows a compositional bias: low complexity. The segment covering 117–135 (SGSGSGSGCGVTGDTGTGS) has biased composition (gly residues).

It localises to the secreted. This is an uncharacterized protein from Dictyostelium discoideum (Social amoeba).